A 210-amino-acid polypeptide reads, in one-letter code: Frataxin, mitochondrial (210 aa).

The N-terminal 41 residues, 1 to 41, are a transit peptide targeting the mitochondrion; sequence MWTFGRRAVAGLLASPSPAQAQTLARAPRLAELAQLCSRRG.

It belongs to the frataxin family. As to quaternary structure, component of the mitochondrial core iron-sulfur cluster (ISC) complex composed of NFS1, LYRM4, NDUFAB1, ISCU, FXN, and FDX2; this complex is a heterohexamer containing two copies of each monomer. Homodimer. Monomer (probable predominant form). Oligomer. Monomers and polymeric aggregates of &gt;1 MDa have been isolated from mitochondria. A small fraction of heterologous overexpressed recombinant frataxin forms high-molecular weight aggregates that incorporate iron. Interacts with LYRM4. Interacts (via ferrous form) with ISCU; the interaction is possible when both are bound to the dimeric form of the cysteine desulfurase complex (NFS1:LYRM4) and the interaction enhances FXN interaction to the dimeric form of the cysteine desulfurase complex (NFS1:LYRM4). Interacts with FECH; one iron-bound FXN monomer seems to interact with a FECH homodimer. Interacts with SDHA and SDHB. Interacts with ACO2; the interaction is dependent on citrate. Interacts with HSPA9. Interacts with ACO1. Interacts with ISCU (cytoplasmic form). In terms of processing, processed in two steps by mitochondrial processing peptidase (MPP). MPP first cleaves the precursor to intermediate form and subsequently converts the intermediate to yield frataxin mature form (frataxin(81-210)) which is the predominant form. The additional forms, frataxin(56-210) and frataxin(78-210), seem to be produced when the normal maturation process is impaired; their physiological relevance is unsure.

It is found in the mitochondrion. It localises to the cytoplasm. The protein localises to the cytosol. The enzyme catalyses 4 Fe(2+) + O2 + 4 H(+) = 4 Fe(3+) + 2 H2O. Its function is as follows. Functions as an activator of persulfide transfer to the scaffoding protein ISCU as component of the core iron-sulfur cluster (ISC) assembly complex and participates to the [2Fe-2S] cluster assembly. Accelerates sulfur transfer from NFS1 persulfide intermediate to ISCU and to small thiols such as L-cysteine and glutathione leading to persulfuration of these thiols and ultimately sulfide release. Binds ferrous ion and is released from FXN upon the addition of both L-cysteine and reduced FDX2 during [2Fe-2S] cluster assembly. The core iron-sulfur cluster (ISC) assembly complex is involved in the de novo synthesis of a [2Fe-2S] cluster, the first step of the mitochondrial iron-sulfur protein biogenesis. This process is initiated by the cysteine desulfurase complex (NFS1:LYRM4:NDUFAB1) that produces persulfide which is delivered on the scaffold protein ISCU in a FXN-dependent manner. Then this complex is stabilized by FDX2 which provides reducing equivalents to accomplish the [2Fe-2S] cluster assembly. Finally, the [2Fe-2S] cluster is transferred from ISCU to chaperone proteins, including HSCB, HSPA9 and GLRX5. May play a role in the protection against iron-catalyzed oxidative stress through its ability to catalyze the oxidation of Fe(2+) to Fe(3+); the oligomeric form but not the monomeric form has in vitro ferroxidase activity. May be able to store large amounts of iron in the form of a ferrihydrite mineral by oligomerization; however, the physiological relevance is unsure as reports are conflicting and the function has only been shown using heterologous overexpression systems. May function as an iron chaperone protein that protects the aconitase [4Fe-4S]2+ cluster from disassembly and promotes enzyme reactivation. May play a role as a high affinity iron binding partner for FECH that is capable of both delivering iron to ferrochelatase and mediating the terminal step in mitochondrial heme biosynthesis. Modulates the RNA-binding activity of ACO1. May be involved in the cytoplasmic iron-sulfur protein biogenesis. May contribute to oxidative stress resistance and overall cell survival. The sequence is that of Frataxin, mitochondrial from Macaca fascicularis (Crab-eating macaque).